The sequence spans 505 residues: DEAD-box ATP-dependent RNA helicase 8 (505 aa).

The tract at residues 1-85 (MNNRGRYPPG…GQIPGGNSNG (85 aa)) is disordered. Residues 20 to 31 (PNPNYQSRSGYQ) are compositionally biased toward polar residues. Over residues 43–71 (NYAQNHQQQFQQAPSQPHQYQQQQQQQQQ) the composition is skewed to low complexity. The Q motif motif lies at 131-159 (NEFEDYFLKRELLMGIYEKGFERPSPIQE). One can recognise a Helicase ATP-binding domain in the interval 162–332 (IPIALTGRDI…DRFLTNPYVI (171 aa)). Residue 175–182 (AKNGTGKT) participates in ATP binding. T237 bears the Phosphothreonine mark. Residues 280-283 (DEAD) carry the DEAD box motif. A Helicase C-terminal domain is found at 342–502 (GITQFYAFVE…QIPPHIDQAI (161 aa)).

This sequence belongs to the DEAD box helicase family. DDX6/DHH1 subfamily.

It localises to the cytoplasm. Its subcellular location is the P-body. It carries out the reaction ATP + H2O = ADP + phosphate + H(+). In terms of biological role, ATP-dependent RNA helicase involved in mRNA turnover, and more specifically in mRNA decapping. The chain is DEAD-box ATP-dependent RNA helicase 8 (RH8) from Arabidopsis thaliana (Mouse-ear cress).